Here is an 843-residue protein sequence, read N- to C-terminus: Probable inorganic carbon transporter subunit DabA 2 (843 aa).

Cys-352, Asp-354, His-536, and Cys-551 together coordinate Zn(2+).

It belongs to the inorganic carbon transporter (TC 9.A.2) DabA family. Forms a complex with DabB. Zn(2+) serves as cofactor.

It localises to the cell inner membrane. In terms of biological role, part of an energy-coupled inorganic carbon pump. The polypeptide is Probable inorganic carbon transporter subunit DabA 2 (Bradyrhizobium sp. (strain BTAi1 / ATCC BAA-1182)).